We begin with the raw amino-acid sequence, 119 residues long: Large ribosomal subunit protein uL22c (119 aa).

It belongs to the universal ribosomal protein uL22 family. As to quaternary structure, part of the 50S ribosomal subunit.

It is found in the plastid. The protein resides in the chloroplast. Functionally, this protein binds specifically to 23S rRNA. The globular domain of the protein is located near the polypeptide exit tunnel on the outside of the subunit, while an extended beta-hairpin is found that lines the wall of the exit tunnel in the center of the 70S ribosome. This is Large ribosomal subunit protein uL22c (rpl22) from Chaetosphaeridium globosum (Charophycean green alga).